A 480-amino-acid polypeptide reads, in one-letter code: EGF-like repeat and discoidin I-like domain-containing protein 3 (480 aa).

The signal sequence occupies residues 1–23; sequence MKRSVAVWLLVGLSLGVPQFGKG. The region spanning 24–60 is the EGF-like 1 domain; the sequence is DICDPNPCENGGICLPGLADGSFSCECPDGFTDPNCS. Intrachain disulfides connect Cys26/Cys37, Cys31/Cys48, and Cys50/Cys59. Thr73 carries an O-linked (GalNAc...) threonine glycan. EGF-like domains are found at residues 74–117 and 119–155; these read SAGP…IHCQ and NINECEVEPCKNGGICTDLVANYSCECPGEFMGRNCQ. Cystine bridges form between Cys78-Cys89, Cys83-Cys105, and Cys107-Cys116. Thr88 is a glycosylation site (O-linked (Fuc...) threonine). The Cell attachment site motif lies at 96-98; it reads RGD. Asn119, Ile120, and Glu122 together coordinate Ca(2+). 6 cysteine pairs are disulfide-bonded: Cys123-Cys134, Cys128-Cys143, Cys145-Cys154, Cys158-Cys314, Cys301-Cys305, and Cys319-Cys476. Residues Asp136 and Leu137 each contribute to the Ca(2+) site. N-linked (GlcNAc...) asparagine glycosylation occurs at Asn140. F5/8 type C domains lie at 158 to 314 and 319 to 476; these read CSGP…LLGC and CSEP…LLGC.

The protein localises to the secreted. Functionally, promotes adhesion of endothelial cells through interaction with the alpha-v/beta-3 integrin receptor. Inhibits formation of vascular-like structures. May be involved in regulation of vascular morphogenesis of remodeling in embryonic development. In Homo sapiens (Human), this protein is EGF-like repeat and discoidin I-like domain-containing protein 3 (EDIL3).